The chain runs to 370 residues: 3-isopropylmalate dehydrogenase (370 aa).

76–89 provides a ligand contact to NAD(+); sequence GPKWDQNPSELRPE. Substrate-binding residues include arginine 96, arginine 106, arginine 134, and aspartate 224. The Mg(2+) site is built by aspartate 224, aspartate 248, and aspartate 252. Position 282 to 294 (282 to 294) interacts with NAD(+); sequence GSAPDIAGQNIAN.

It belongs to the isocitrate and isopropylmalate dehydrogenases family. LeuB type 1 subfamily. Homodimer. Mg(2+) serves as cofactor. Requires Mn(2+) as cofactor.

The protein resides in the cytoplasm. The enzyme catalyses (2R,3S)-3-isopropylmalate + NAD(+) = 4-methyl-2-oxopentanoate + CO2 + NADH. The protein operates within amino-acid biosynthesis; L-leucine biosynthesis; L-leucine from 3-methyl-2-oxobutanoate: step 3/4. Functionally, catalyzes the oxidation of 3-carboxy-2-hydroxy-4-methylpentanoate (3-isopropylmalate) to 3-carboxy-4-methyl-2-oxopentanoate. The product decarboxylates to 4-methyl-2 oxopentanoate. The sequence is that of 3-isopropylmalate dehydrogenase from Bacillus licheniformis (strain ATCC 14580 / DSM 13 / JCM 2505 / CCUG 7422 / NBRC 12200 / NCIMB 9375 / NCTC 10341 / NRRL NRS-1264 / Gibson 46).